The primary structure comprises 230 residues: Uracil-DNA glycosylase (230 aa).

Asp-65 serves as the catalytic Proton acceptor.

It belongs to the uracil-DNA glycosylase (UDG) superfamily. UNG family.

Its subcellular location is the cytoplasm. The catalysed reaction is Hydrolyzes single-stranded DNA or mismatched double-stranded DNA and polynucleotides, releasing free uracil.. In terms of biological role, excises uracil residues from the DNA which can arise as a result of misincorporation of dUMP residues by DNA polymerase or due to deamination of cytosine. The sequence is that of Uracil-DNA glycosylase from Pediococcus pentosaceus (strain ATCC 25745 / CCUG 21536 / LMG 10740 / 183-1w).